The chain runs to 154 residues: Large ribosomal subunit protein uL13 (154 aa).

This sequence belongs to the universal ribosomal protein uL13 family. As to quaternary structure, part of the 50S ribosomal subunit.

In terms of biological role, this protein is one of the early assembly proteins of the 50S ribosomal subunit, although it is not seen to bind rRNA by itself. It is important during the early stages of 50S assembly. This is Large ribosomal subunit protein uL13 from Rhodospirillum centenum (strain ATCC 51521 / SW).